The chain runs to 374 residues: MSEIIHRSKTRPVRVGSLTIGGNNEVIIQSMTTTKTHDVDATVAQIHRLEEAGCQIVRVACPDERAADAIPEIKKRINIPLVADIHFDYKLALKAIEGGVDKIRINPGNIGRREKVEAVVKAAKERGVPIRIGVNAGSLEKRILEKYGYPTAEGMVESALYHIRILEELDFHDIIVSLKASDVRLAIEAYEKAARTFDYPLHVGITEAGTLFSGTIKSAVGLGAILSKGIGNTIRISLSADPVEEVKVAREILKTFGLASNAATLISCPTCGRIEIDLISIANEIEDYIAKIKAPIKVAVLGCAVNGPGEAREADIGIAGARGEGLLFRHGKIVRKVPEEQMVEELKKEIDKLAEEYFAKQKEKEAALKGNAVE.

Residues Cys268, Cys271, Cys303, and Glu310 each coordinate [4Fe-4S] cluster.

The protein belongs to the IspG family. [4Fe-4S] cluster serves as cofactor.

The catalysed reaction is (2E)-4-hydroxy-3-methylbut-2-enyl diphosphate + oxidized [flavodoxin] + H2O + 2 H(+) = 2-C-methyl-D-erythritol 2,4-cyclic diphosphate + reduced [flavodoxin]. It functions in the pathway isoprenoid biosynthesis; isopentenyl diphosphate biosynthesis via DXP pathway; isopentenyl diphosphate from 1-deoxy-D-xylulose 5-phosphate: step 5/6. Its function is as follows. Converts 2C-methyl-D-erythritol 2,4-cyclodiphosphate (ME-2,4cPP) into 1-hydroxy-2-methyl-2-(E)-butenyl 4-diphosphate. This chain is 4-hydroxy-3-methylbut-2-en-1-yl diphosphate synthase (flavodoxin), found in Geobacillus thermodenitrificans (strain NG80-2).